The sequence spans 781 residues: Probable aminopeptidase 2 (781 aa).

Substrate is bound by residues glutamate 105 and glycine 237–asparagine 241. Residue histidine 272 participates in Zn(2+) binding. The active-site Proton acceptor is glutamate 273. Zn(2+)-binding residues include histidine 276 and glutamate 295.

Belongs to the peptidase M1 family. Zn(2+) is required as a cofactor.

It is found in the cytoplasm. This is Probable aminopeptidase 2 (ape2) from Sulfurisphaera tokodaii (strain DSM 16993 / JCM 10545 / NBRC 100140 / 7) (Sulfolobus tokodaii).